We begin with the raw amino-acid sequence, 221 residues long: Very-long-chain (3R)-3-hydroxyacyl-CoA dehydratase PASTICCINO 2A (221 aa).

Residues 1 to 11 (MAGVGSAVRRL) are Cytoplasmic-facing. Residues 12–32 (YLSVYNWAVFFGWAQVLYYAV) form a helical membrane-spanning segment. At 33–51 (TTLLESGHEAVYAAVERPL) the chain is on the lumenal side. The helical transmembrane segment at 52–70 (QFAQTAAFLEILHGLVGLV) threads the bilayer. Residues 71 to 76 (RSPVSA) are Cytoplasmic-facing. A helical transmembrane segment spans residues 77–95 (TLPQIGSRLFLTWGILWSF). At 96 to 100 (PETHS) the chain is on the lumenal side. A helical membrane pass occupies residues 101–121 (HILVTSLVISWSITEIIRYSF). Residues 122-141 (FGMKEAFGFAPSWLLWLRYS) lie on the Cytoplasmic side of the membrane. Residues 142 to 165 (TFMVLYPTGISSEVGLIYIALPYM) form a helical membrane-spanning segment. Residues Y147 and E154 contribute to the active site. Topologically, residues 166–184 (KASEKYCLRMPNKWNFSFD) are lumenal. Residues 185-209 (FFYASILSLAIYVPGSPHMFTYMLA) traverse the membrane as a helical segment. Over 210–221 (QRKKALAKAKAA) the chain is Cytoplasmic.

The protein belongs to the very long-chain fatty acids dehydratase HACD family.

The protein localises to the endoplasmic reticulum membrane. The catalysed reaction is a very-long-chain (3R)-3-hydroxyacyl-CoA = a very-long-chain (2E)-enoyl-CoA + H2O. The protein operates within lipid metabolism; fatty acid biosynthesis. Its function is as follows. Catalyzes the third of the four reactions of the long-chain fatty acids elongation cycle. This endoplasmic reticulum-bound enzymatic process, allows the addition of two carbons to the chain of long- and very long-chain fatty acids/VLCFAs per cycle. This enzyme catalyzes the dehydration of the 3-hydroxyacyl-CoA intermediate into trans-2,3-enoyl-CoA, within each cycle of fatty acid elongation. Thereby, it participates in the production of VLCFAs of different chain lengths that are involved in multiple biological processes as precursors of membrane lipids and lipid mediators. May be an anti-phosphatase that prevents CDKA-1 dephosphorylation and activation. Involved in the hormonal control of cell division and differentiation. Required for proliferation control of meristematic and non-meristematic cells. Negative regulator of the cell cycle. This chain is Very-long-chain (3R)-3-hydroxyacyl-CoA dehydratase PASTICCINO 2A (PAS2A), found in Oryza sativa subsp. japonica (Rice).